A 434-amino-acid polypeptide reads, in one-letter code: Eukaryotic translation initiation factor 3 subunit E-2 (434 aa).

Residues 219–392 (FFNHPKGRDL…GHVVMGTQPL (174 aa)) form the PCI domain.

The protein belongs to the eIF-3 subunit E family. In terms of assembly, component of the eukaryotic translation initiation factor 3 (eIF-3) complex. The eIF-3 complex interacts with pix. Interacts with mxt.

It is found in the cytoplasm. In terms of biological role, component of the eukaryotic translation initiation factor 3 (eIF-3) complex, which is involved in protein synthesis of a specialized repertoire of mRNAs and, together with other initiation factors, stimulates binding of mRNA and methionyl-tRNAi to the 40S ribosome. The eIF-3 complex specifically targets and initiates translation of a subset of mRNAs involved in cell proliferation. This is Eukaryotic translation initiation factor 3 subunit E-2 (eIF3-S6-2) from Drosophila willistoni (Fruit fly).